Consider the following 560-residue polypeptide: MSYKQQYAQVLHDVIGDALSQEEIEQLIEQPKHEDHGDLAFPCFQLAKAFRKAPMMIATELAEKIDNPLFSNVQAAGPYVNVFLNREVVSREIIKRVLEEQQAYGSSELNGKTIVTDFSSPNIAKPFSMGHLRSTVIGNALNQISRKKGYEVVGINHLGDWGTQFGKLMVAYNMWGKEEDVRSEPIKELLKLYVRFHEEAEENPGLEDEGRAWFKKLEQGDEQATALWTWFREVSLVEFSRVYEMLGVSFDSLNGEAFYNDKMQHVIDLLEEKDLLVESEGAMVVDLEAEGMPPALIKKKDGATLYATRDLAAAVYRLETYGFEQAFYVVGGEQALHFKQLFAVLKKLGFENVDGMHHVPFGLIMKDGKKMSTRKGRIVLLEEVLQDAINVAKQNIAEKNPNLANAEQTAREVGVGAVIFHDLKNERMNNIEFDLEQMLKFEGETGPYVQYTNARANSLLRKGAYDGSAFNGSADDYSWGVVSMLNQFSAVIDRAFTRREPSIISRYVLDLAQSFNKYYGQVRVLEDDAEKQSRLALVKSVTIVLTEGLRLLGVGAPEEM.

Residues 121–131 (PNIAKPFSMGH) carry the 'HIGH' region motif.

It belongs to the class-I aminoacyl-tRNA synthetase family. Monomer.

The protein localises to the cytoplasm. It carries out the reaction tRNA(Arg) + L-arginine + ATP = L-arginyl-tRNA(Arg) + AMP + diphosphate. This Exiguobacterium sibiricum (strain DSM 17290 / CCUG 55495 / CIP 109462 / JCM 13490 / 255-15) protein is Arginine--tRNA ligase.